The primary structure comprises 564 residues: NAD-dependent malic enzyme (564 aa).

The active-site Proton donor is Tyr-102. Residue Arg-155 participates in NAD(+) binding. The Proton acceptor role is filled by Lys-173. Glu-244, Asp-245, and Asp-268 together coordinate a divalent metal cation. Residues Asp-268 and Asn-417 each coordinate NAD(+).

Belongs to the malic enzymes family. As to quaternary structure, homotetramer. It depends on Mg(2+) as a cofactor. Requires Mn(2+) as cofactor.

It carries out the reaction (S)-malate + NAD(+) = pyruvate + CO2 + NADH. The catalysed reaction is oxaloacetate + H(+) = pyruvate + CO2. The chain is NAD-dependent malic enzyme from Pseudomonas aeruginosa (strain LESB58).